A 391-amino-acid polypeptide reads, in one-letter code: Erythronate-4-phosphate dehydrogenase (391 aa).

Ser-45 and Thr-67 together coordinate substrate. NAD(+) contacts are provided by Asp-147 and Thr-176. Arg-209 is an active-site residue. Asp-238 is a binding site for NAD(+). Residue Glu-243 is part of the active site. His-260 serves as the catalytic Proton donor. Gly-263 provides a ligand contact to NAD(+). Tyr-264 is a substrate binding site.

This sequence belongs to the D-isomer specific 2-hydroxyacid dehydrogenase family. PdxB subfamily. Homodimer.

Its subcellular location is the cytoplasm. It catalyses the reaction 4-phospho-D-erythronate + NAD(+) = (R)-3-hydroxy-2-oxo-4-phosphooxybutanoate + NADH + H(+). Its pathway is cofactor biosynthesis; pyridoxine 5'-phosphate biosynthesis; pyridoxine 5'-phosphate from D-erythrose 4-phosphate: step 2/5. Functionally, catalyzes the oxidation of erythronate-4-phosphate to 3-hydroxy-2-oxo-4-phosphonooxybutanoate. This chain is Erythronate-4-phosphate dehydrogenase, found in Photobacterium profundum (strain SS9).